Consider the following 108-residue polypeptide: Nucleoid-associated protein PSHAa1202 (108 aa).

Disordered regions lie at residues 1–20 and 87–108; these read MFKG…QDRM and TQER…KMPF.

Belongs to the YbaB/EbfC family. Homodimer.

It localises to the cytoplasm. Its subcellular location is the nucleoid. Functionally, binds to DNA and alters its conformation. May be involved in regulation of gene expression, nucleoid organization and DNA protection. This Pseudoalteromonas translucida (strain TAC 125) protein is Nucleoid-associated protein PSHAa1202.